Here is a 530-residue protein sequence, read N- to C-terminus: 5-aminolevulinate synthase, mitochondrial (530 aa).

The transit peptide at 1–26 (MFRPVLKVRPSFSYPYSIVSSRSVRL) directs the protein to the mitochondrion. Positions 73, 186, and 205 each coordinate substrate. Ser-238, His-266, and Thr-316 together coordinate pyridoxal 5'-phosphate. Residue Lys-319 is part of the active site. Lys-319 carries the post-translational modification N6-(pyridoxal phosphate)lysine. Residues Thr-348 and Thr-349 each contribute to the pyridoxal 5'-phosphate site. Thr-434 is a binding site for substrate.

The protein belongs to the class-II pyridoxal-phosphate-dependent aminotransferase family. As to quaternary structure, homodimer. Requires pyridoxal 5'-phosphate as cofactor.

The protein resides in the mitochondrion matrix. It carries out the reaction succinyl-CoA + glycine + H(+) = 5-aminolevulinate + CO2 + CoA. It participates in porphyrin-containing compound metabolism; protoporphyrin-IX biosynthesis; 5-aminolevulinate from glycine: step 1/1. In terms of biological role, catalyzes the synthesis of 5-aminolevulinate (ALA) from succinyl-CoA and glycine, the first and rate-limiting step in heme biosynthesis. The protein is 5-aminolevulinate synthase, mitochondrial (HEM1) of Candida glabrata (strain ATCC 2001 / BCRC 20586 / JCM 3761 / NBRC 0622 / NRRL Y-65 / CBS 138) (Yeast).